The following is a 280-amino-acid chain: Protease HtpX (280 aa).

The next 2 helical transmembrane spans lie at 7–26 and 30–49; these read TFILLASLTALLVVIGGLLG and GMLVALLFAGIMNFSAYWYS. Histidine 129 contributes to the Zn(2+) binding site. Residue glutamate 130 is part of the active site. Histidine 133 serves as a coordination point for Zn(2+). Helical transmembrane passes span 146–166 and 178–198; these read ATIAGAISGIANMFMWLSMFG and VVGMIMMIVAPLAAGLIQMAI. Residue glutamate 203 participates in Zn(2+) binding.

Belongs to the peptidase M48B family. Zn(2+) is required as a cofactor.

The protein localises to the cell inner membrane. The chain is Protease HtpX from Legionella pneumophila (strain Lens).